The primary structure comprises 382 residues: Protein phosphatase 1A (382 aa).

Gly-2 carries the N-myristoyl glycine lipid modification. Positions 23–291 constitute a PPM-type phosphatase domain; the sequence is RYGLSSMQGW…DNMSVILICF (269 aa). Residues Asp-60, Gly-61, Asp-239, and Asp-282 each coordinate Mn(2+). Ser-375 and Ser-377 each carry phosphoserine.

It belongs to the PP2C family. As to quaternary structure, monomer. Interacts with SMAD2; the interaction dephosphorylates SMAD2 in its C-terminal SXS motif resulting in disruption of the SMAD2/SMAD4 complex, SMAD2 nuclear export and termination of the TGF-beta-mediated signaling. Interacts with SMAD2; the interaction dephosphorylates SMAD2 in its C-terminal SXS motif resulting in disruption of the SMAD2/SMAD4 complex, SMAD2 nuclear export and termination of the TGF-beta-mediated signaling. Interacts with the phosphorylated form of IKBKB/IKKB. The cofactor is Mg(2+). Mn(2+) is required as a cofactor. Post-translationally, N-myristoylation is essential for the recognition of its substrates for dephosphorylation.

It is found in the nucleus. Its subcellular location is the cytoplasm. The protein localises to the cytosol. The protein resides in the membrane. The catalysed reaction is O-phospho-L-seryl-[protein] + H2O = L-seryl-[protein] + phosphate. The enzyme catalyses O-phospho-L-threonyl-[protein] + H2O = L-threonyl-[protein] + phosphate. Its function is as follows. Enzyme with a broad specificity. Negatively regulates TGF-beta signaling through dephosphorylating SMAD2 and SMAD3, resulting in their dissociation from SMAD4, nuclear export of the SMADs and termination of the TGF-beta-mediated signaling. Dephosphorylates PRKAA1 and PRKAA2. Plays an important role in the termination of TNF-alpha-mediated NF-kappa-B activation through dephosphorylating and inactivating IKBKB/IKKB. The sequence is that of Protein phosphatase 1A (Ppm1a) from Mus musculus (Mouse).